An 860-amino-acid chain; its full sequence is Leucine--tRNA ligase (860 aa).

Residues 42–52 (PYPSGRLHMGH) carry the 'HIGH' region motif. Positions 619–623 (KMSKS) match the 'KMSKS' region motif. An ATP-binding site is contributed by lysine 622.

It belongs to the class-I aminoacyl-tRNA synthetase family.

It localises to the cytoplasm. The enzyme catalyses tRNA(Leu) + L-leucine + ATP = L-leucyl-tRNA(Leu) + AMP + diphosphate. This chain is Leucine--tRNA ligase, found in Erwinia tasmaniensis (strain DSM 17950 / CFBP 7177 / CIP 109463 / NCPPB 4357 / Et1/99).